The chain runs to 428 residues: Methyl-branched lipid omega-hydroxylase (428 aa).

Residue cysteine 379 participates in heme binding.

It belongs to the cytochrome P450 family. Requires heme as cofactor.

The catalysed reaction is a methyl-branched lipid + O2 + 2 reduced ferredoxin [iron-sulfur] cluster + 2 H(+) = an omega-hydroxy-methyl-branched lipid + H2O + 2 oxidized ferredoxin [iron-sulfur] cluster.. It carries out the reaction cholest-4-en-3-one + 6 reduced [2Fe-2S]-[ferredoxin] + 3 O2 + 5 H(+) = (25R)-3-oxocholest-4-en-26-oate + 6 oxidized [2Fe-2S]-[ferredoxin] + 4 H2O. It functions in the pathway lipid metabolism; branched-chain fatty acid metabolism. Functionally, primarily hydroxylates the omega-carbon of a number of methyl-branched lipids, including (2E,6E)-farnesol, phytanate, geranylgeraniol, 15-methylpalmitate and (2E,6E)-farnesyl diphosphate. Also catalyzes the sequential oxidation of the terminal methyl of cholest-4-en-3-one into (25R)-26-hydroxycholest-4-en-3-one (alcohol), (25R)-26-oxocholest-4-en-3-one (aldehyde), to finally yield the carboxylic acid (25R)-3-oxocholest-4-en-26-oate. Also able to sequentially oxidize cholesterol itself, not only cholest-4-en-3-one. The chain is Methyl-branched lipid omega-hydroxylase (cyp124) from Mycobacterium tuberculosis (strain CDC 1551 / Oshkosh).